Consider the following 55-residue polypeptide: Cytochrome c oxidase subunit 7s (55 aa).

Residues Leu13 to Val35 form a helical membrane-spanning segment.

Slime mold cytochrome c oxidase consists of at least seven different polypeptides species, subunits I, II, III, IV, V, VI, and VIIe/s in order of MW.

The protein resides in the mitochondrion inner membrane. It carries out the reaction 4 Fe(II)-[cytochrome c] + O2 + 8 H(+)(in) = 4 Fe(III)-[cytochrome c] + 2 H2O + 4 H(+)(out). This protein is one of the nuclear-coded polypeptide chains of cytochrome c oxidase, the terminal oxidase in mitochondrial electron transport. The protein is Cytochrome c oxidase subunit 7s (cxgS) of Dictyostelium discoideum (Social amoeba).